We begin with the raw amino-acid sequence, 301 residues long: Ribosomal protein L11 methyltransferase (301 aa).

The S-adenosyl-L-methionine site is built by T130, G151, D172, and N239.

It belongs to the methyltransferase superfamily. PrmA family.

It is found in the cytoplasm. It carries out the reaction L-lysyl-[protein] + 3 S-adenosyl-L-methionine = N(6),N(6),N(6)-trimethyl-L-lysyl-[protein] + 3 S-adenosyl-L-homocysteine + 3 H(+). In terms of biological role, methylates ribosomal protein L11. This is Ribosomal protein L11 methyltransferase from Campylobacter hominis (strain ATCC BAA-381 / DSM 21671 / CCUG 45161 / LMG 19568 / NCTC 13146 / CH001A).